Consider the following 192-residue polypeptide: uncharacterized protein (192 aa).

The Nudix hydrolase domain occupies Q29–R160. Positions G67–A89 match the Nudix box motif. Mg(2+) contacts are provided by E83 and E87.

It belongs to the Nudix hydrolase family. PCD1 subfamily. Requires Mn(2+) as cofactor. The cofactor is Mg(2+).

Probably mediates the hydrolysis of some nucleoside diphosphate derivatives. This is an uncharacterized protein from Pectobacterium atrosepticum (strain SCRI 1043 / ATCC BAA-672) (Erwinia carotovora subsp. atroseptica).